A 581-amino-acid chain; its full sequence is Proline--tRNA ligase (581 aa).

Belongs to the class-II aminoacyl-tRNA synthetase family. ProS type 1 subfamily. In terms of assembly, homodimer.

The protein resides in the cytoplasm. It carries out the reaction tRNA(Pro) + L-proline + ATP = L-prolyl-tRNA(Pro) + AMP + diphosphate. Catalyzes the attachment of proline to tRNA(Pro) in a two-step reaction: proline is first activated by ATP to form Pro-AMP and then transferred to the acceptor end of tRNA(Pro). As ProRS can inadvertently accommodate and process non-cognate amino acids such as alanine and cysteine, to avoid such errors it has two additional distinct editing activities against alanine. One activity is designated as 'pretransfer' editing and involves the tRNA(Pro)-independent hydrolysis of activated Ala-AMP. The other activity is designated 'posttransfer' editing and involves deacylation of mischarged Ala-tRNA(Pro). The misacylated Cys-tRNA(Pro) is not edited by ProRS. In Kosmotoga olearia (strain ATCC BAA-1733 / DSM 21960 / TBF 19.5.1), this protein is Proline--tRNA ligase.